Reading from the N-terminus, the 331-residue chain is Anthranilate phosphoribosyltransferase (331 aa).

Residues Gly79, 82–83 (GD), Ser87, 89–92 (NIST), 107–115 (KHCNTSISS), and Ser119 contribute to the 5-phospho-alpha-D-ribose 1-diphosphate site. Gly79 provides a ligand contact to anthranilate. Ser91 lines the Mg(2+) pocket. Asn110 is a binding site for anthranilate. Arg165 serves as a coordination point for anthranilate. Mg(2+) is bound by residues Asp223 and Glu224.

Belongs to the anthranilate phosphoribosyltransferase family. Homodimer. Mg(2+) is required as a cofactor.

The catalysed reaction is N-(5-phospho-beta-D-ribosyl)anthranilate + diphosphate = 5-phospho-alpha-D-ribose 1-diphosphate + anthranilate. The protein operates within amino-acid biosynthesis; L-tryptophan biosynthesis; L-tryptophan from chorismate: step 2/5. Its function is as follows. Catalyzes the transfer of the phosphoribosyl group of 5-phosphorylribose-1-pyrophosphate (PRPP) to anthranilate to yield N-(5'-phosphoribosyl)-anthranilate (PRA). The sequence is that of Anthranilate phosphoribosyltransferase from Buchnera aphidicola subsp. Schlechtendalia chinensis.